The sequence spans 421 residues: 3-isopropylmalate dehydratase large subunit (421 aa).

[4Fe-4S] cluster-binding residues include cysteine 300, cysteine 360, and cysteine 363.

The protein belongs to the aconitase/IPM isomerase family. LeuC type 2 subfamily. As to quaternary structure, heterodimer of LeuC and LeuD. [4Fe-4S] cluster serves as cofactor.

The catalysed reaction is (2R,3S)-3-isopropylmalate = (2S)-2-isopropylmalate. It functions in the pathway amino-acid biosynthesis; L-leucine biosynthesis; L-leucine from 3-methyl-2-oxobutanoate: step 2/4. Functionally, catalyzes the isomerization between 2-isopropylmalate and 3-isopropylmalate, via the formation of 2-isopropylmaleate. The chain is 3-isopropylmalate dehydratase large subunit from Lachnoclostridium phytofermentans (strain ATCC 700394 / DSM 18823 / ISDg) (Clostridium phytofermentans).